Consider the following 61-residue polypeptide: Keratin-associated protein 8-1 (61 aa).

The segment at 13–49 (GCYWGSYGYPLGYSVGCGYGSTYSPVGYGLGYGYNGC) is 11 X 2 AA repeats of G-[YCGS].

It belongs to the KRTAP type 8 family. Interacts with hair keratins. In terms of tissue distribution, expression restricted exclusively to the cortical cells of hair follicles.

Its function is as follows. In the hair cortex, hair keratin intermediate filaments are embedded in an interfilamentous matrix, consisting of hair keratin-associated proteins (KRTAP), which are essential for the formation of a rigid and resistant hair shaft through their extensive disulfide bond cross-linking with abundant cysteine residues of hair keratins. The matrix proteins include the high-sulfur and high-glycine-tyrosine keratins. The protein is Keratin-associated protein 8-1 (Krtap8-1) of Mus musculus (Mouse).